Consider the following 702-residue polypeptide: Pheromone-processing carboxypeptidase KEX1 (702 aa).

An N-terminal signal peptide occupies residues 1 to 19 (MKLILSTLIVFIHTLLVSA). Topologically, residues 20–555 (LPTKEGSDPN…SDSTSSKFTR (536 aa)) are lumenal. N-linked (GlcNAc...) asparagine glycosylation is found at N85 and N122. Active-site residues include S184 and D394. 2 N-linked (GlcNAc...) asparagine glycosylation sites follow: N441 and N449. Residue H452 is part of the active site. The disordered stretch occupies residues 491-531 (SRKESDASANGEENAGSDKVPGDSPSQTMDPMISSSTASSS). A helical membrane pass occupies residues 556 to 576 (LIQLAVILVIFWGVYVLYASY). At 577–702 (KSRPSSIIKK…THNQKQKPMN (126 aa)) the chain is on the cytoplasmic side. 2 disordered regions span residues 582–603 (SIIK…GKKK) and 659–702 (DIEL…KPMN). Composition is skewed to polar residues over residues 587-598 (PTNNTSNVTRSS) and 692-702 (ATHNQKQKPMN).

The protein belongs to the peptidase S10 family.

The protein localises to the golgi apparatus. It is found in the trans-Golgi network membrane. It carries out the reaction Preferential release of a C-terminal arginine or lysine residue.. Its function is as follows. Protease with a carboxypeptidase B-like function involved in the C-terminal processing of the lysine and arginine residues from protein precursors. Promotes cell fusion and is involved in the programmed cell death. This chain is Pheromone-processing carboxypeptidase KEX1 (KEX1), found in Candida albicans (strain WO-1) (Yeast).